The chain runs to 721 residues: Pentatricopeptide repeat-containing protein At3g49710 (721 aa).

PPR repeat units lie at residues 42-72 (STYLSNHFVNLYSKCGRLSYARAAFYSTEEP), 73-103 (NVFSYNVIVKAYAKDSKIHIARQLFDEIPQP), 104-138 (DTVSYNTLISGYADARETFAAMVLFKRMRKLGFEV), 139-169 (DGFTLSGLIAACCDRVDLIKQLHCFSVSGGF), 172-202 (YSSVNNAFVTYYSKGGLLREAVSVFYGMDEL), 204-238 (DEVSWNSMIVAYGQHKEGAKALALYKEMIFKGFKI), 239-273 (DMFTLASVLNALTSLDHLIGGRQFHGKLIKAGFHQ), 274-307 (NSHVGSGLIDFYSKCGGCDGMYDSEKVFQEILSP), 308-343 (DLVVWNTMISGYSMNEELSEEAVKSFRQMQRIGHRP), 344-378 (DDCSFVCVTSACSNLSSPSQCKQIHGLAIKSHIPS), 380-410 (RISVNNALISLYYKSGNLQDARWVFDRMPEL), 411-445 (NAVSFNCMIKGYAQHGHGTEALLLYQRMLDSGIAP), 446-476 (NKITFVAVLSACAHCGKVDEGQEYFNTMKET), and 482-512 (EAEHYSCMIDLLGRAGKLEEAERFIDAMPYK). Positions 517 to 592 (AWAALLGACR…KPGCSWIEVK (76 aa)) are type E motif. The type E(+) motif stretch occupies residues 593–623 (KKKHVFVAEDWSHPMIREVNEYLEEMMKKMK). The type DYW motif stretch occupies residues 624 to 721 (KVGYVMDKKW…DGKCSCGDYW (98 aa)).

This sequence belongs to the PPR family. PCMP-H subfamily.

In Arabidopsis thaliana (Mouse-ear cress), this protein is Pentatricopeptide repeat-containing protein At3g49710 (PCMP-H79).